We begin with the raw amino-acid sequence, 417 residues long: UDP-N-acetylglucosamine 1-carboxyvinyltransferase (417 aa).

22–23 (KN) contributes to the phosphoenolpyruvate binding site. Arg-92 serves as a coordination point for UDP-N-acetyl-alpha-D-glucosamine. The Proton donor role is filled by Cys-116. Residue Cys-116 is modified to 2-(S-cysteinyl)pyruvic acid O-phosphothioketal. Residues Asp-304 and Ile-326 each contribute to the UDP-N-acetyl-alpha-D-glucosamine site.

Belongs to the EPSP synthase family. MurA subfamily.

It is found in the cytoplasm. It carries out the reaction phosphoenolpyruvate + UDP-N-acetyl-alpha-D-glucosamine = UDP-N-acetyl-3-O-(1-carboxyvinyl)-alpha-D-glucosamine + phosphate. It participates in cell wall biogenesis; peptidoglycan biosynthesis. In terms of biological role, cell wall formation. Adds enolpyruvyl to UDP-N-acetylglucosamine. The sequence is that of UDP-N-acetylglucosamine 1-carboxyvinyltransferase from Geotalea daltonii (strain DSM 22248 / JCM 15807 / FRC-32) (Geobacter daltonii).